A 438-amino-acid chain; its full sequence is Asparagine--tRNA ligase (438 aa).

Belongs to the class-II aminoacyl-tRNA synthetase family. As to quaternary structure, homodimer.

The protein resides in the cytoplasm. It carries out the reaction tRNA(Asn) + L-asparagine + ATP = L-asparaginyl-tRNA(Asn) + AMP + diphosphate + H(+). The sequence is that of Asparagine--tRNA ligase from Thermus thermophilus (strain ATCC 27634 / DSM 579 / HB8).